A 558-amino-acid chain; its full sequence is Protein SET DOMAIN GROUP 41 (558 aa).

Residues 115–249 (PSISVAIHHA…SGEEITVSYI (135 aa)) form the SET domain.

It belongs to the class V-like SAM-binding methyltransferase superfamily.

The protein is Protein SET DOMAIN GROUP 41 (SDG41) of Arabidopsis thaliana (Mouse-ear cress).